The primary structure comprises 363 residues: Strychnine O-methyltransferase (363 aa).

Gly-204, Asp-227, Asp-249, Met-250, and Lys-263 together coordinate S-adenosyl-L-methionine. His-267 acts as the Proton acceptor in catalysis.

This sequence belongs to the class I-like SAM-binding methyltransferase superfamily. Cation-independent O-methyltransferase family.

The catalysed reaction is 10-hydroxystrychnine + S-adenosyl-L-methionine = beta-colubrine + S-adenosyl-L-homocysteine + H(+). It catalyses the reaction 11-demethylbrucine + S-adenosyl-L-methionine = brucine + S-adenosyl-L-homocysteine + H(+). Its pathway is alkaloid biosynthesis. In terms of biological role, O-methyltransferase involved in the biosynthesis of curare monoterpene indole alkaloids (MIAs), natural products such as strychnine, a neurotoxic compound used as a pesticide to control rodents, and its pharmacologically active derivatives, including brucine, used to regulate blood pressure. Curare alkaloids act as animal glycine receptor antagonists. Catalyzes the conversion of 10-OH strychnine to beta-colubrine, and of 11-deMe brucine to brucine. The polypeptide is Strychnine O-methyltransferase (Strychnos nux-vomica (Poison nut)).